A 314-amino-acid chain; its full sequence is Malate dehydrogenase (314 aa).

Residues 11–16 (GSGNIG) and aspartate 35 each bind NAD(+). Residues arginine 84 and arginine 90 each coordinate substrate. NAD(+) contacts are provided by residues asparagine 97 and 120–122 (ITN). Asparagine 122 and arginine 153 together coordinate substrate. The active-site Proton acceptor is histidine 177.

Belongs to the LDH/MDH superfamily. MDH type 3 family.

It carries out the reaction (S)-malate + NAD(+) = oxaloacetate + NADH + H(+). Its function is as follows. Catalyzes the reversible oxidation of malate to oxaloacetate. The sequence is that of Malate dehydrogenase from Rickettsia typhi (strain ATCC VR-144 / Wilmington).